The following is a 276-amino-acid chain: Lectin-like protein At3g16530 (276 aa).

An N-terminal signal peptide occupies residues 1-19 (MQIHKLCFLVLFLANAAFA). A legume-lectin like region spans residues 20–270 (VKFNFDSFDG…RHDIWSWSFE (251 aa)). Asn-79, Asn-129, and Asn-196 each carry an N-linked (GlcNAc...) asparagine glycan.

Belongs to the leguminous lectin family.

It localises to the secreted. It is found in the extracellular space. The protein localises to the apoplast. This Arabidopsis thaliana (Mouse-ear cress) protein is Lectin-like protein At3g16530.